We begin with the raw amino-acid sequence, 478 residues long: UDP-glycosyltransferase 71B5 (478 aa).

Residues serine 280, 347–349 (APQ), 364–372 (HCGWNSILE), and 386–389 (YAEQ) contribute to the UDP-alpha-D-glucose site.

It belongs to the UDP-glycosyltransferase family.

Possesses low quercetin 3-O-glucosyltransferase activity in vitro. The sequence is that of UDP-glycosyltransferase 71B5 (UGT71B5) from Arabidopsis thaliana (Mouse-ear cress).